The primary structure comprises 332 residues: Solute carrier family 25 member 16 (332 aa).

Solcar repeat units lie at residues 34-120 (FYWL…YKTL), 128-216 (SGHV…LKSV), and 238-328 (LKTH…MKQF). 6 consecutive transmembrane segments (helical) span residues 37 to 57 (LRSF…VAPL), 88 to 108 (GFLG…PYGA), 134 to 154 (LMAG…LDMV), 191 to 211 (GLMP…FTFG), 244 to 264 (LLCG…FDVT), and 299 to 319 (GLYR…AVAF).

This sequence belongs to the mitochondrial carrier (TC 2.A.29) family.

The protein resides in the mitochondrion inner membrane. May be involved in the transport of coenzyme A in the mitochondrial matrix. Very little is known about the physiological function of this carrier. The polypeptide is Solute carrier family 25 member 16 (Homo sapiens (Human)).